We begin with the raw amino-acid sequence, 253 residues long: Sulfur carrier protein FdhD (253 aa).

Cysteine 100 (cysteine persulfide intermediate) is an active-site residue.

This sequence belongs to the FdhD family.

It localises to the cytoplasm. Required for formate dehydrogenase (FDH) activity. Acts as a sulfur carrier protein that transfers sulfur from IscS to the molybdenum cofactor prior to its insertion into FDH. This chain is Sulfur carrier protein FdhD, found in Sulfolobus acidocaldarius (strain ATCC 33909 / DSM 639 / JCM 8929 / NBRC 15157 / NCIMB 11770).